The chain runs to 372 residues: Adaptive-response sensory kinase SasA (372 aa).

The 214-residue stretch at 147–360 folds into the Histidine kinase domain; the sequence is MVAHELRTPL…CFHFTVPVWQ (214 aa). His150 bears the Phosphohistidine; by autocatalysis mark.

In terms of assembly, homooligomerizes. Interacts with KaiC. Participates in the KaiBC complex, whose core is composed of a KaiC homohexamer and 6 KaiB.

It carries out the reaction ATP + protein L-histidine = ADP + protein N-phospho-L-histidine.. Member of the two-component regulatory system SasA/RpaA involved in genome-wide circadian gene expression. One of several clock output pathways. Participates in the Kai clock protein complex, the main circadian regulator in cyanobacteria, via its interaction with KaiC. KaiC enhances the autophosphorylation activity of SasA, which then transfers its phosphate group to RpaA to activate it. In addition to its output function, recruits fold-shifted KaiB (KaiB(fs)) to KaiC to cooperatively form the KaiB(6):KaiC(6) complex (independent of SasA kinase activity). Required for robustness of the circadian rhythm of gene expression and is involved in clock output, also required for adaptation to light/dark cycles. This is Adaptive-response sensory kinase SasA from Prochlorococcus marinus (strain AS9601).